The following is a 195-amino-acid chain: uncharacterized protein (195 aa).

The first 21 residues, 1–21 (MHFSSCVLVSALAIVTNVATA), serve as a signal peptide directing secretion. N-linked (GlcNAc...) asparagine glycans are attached at residues N62 and N109. The disordered stretch occupies residues 119–141 (DWDEDTVTGENAPDSGEPFSTSH).

Its subcellular location is the secreted. This is an uncharacterized protein from Arthroderma benhamiae (strain ATCC MYA-4681 / CBS 112371) (Trichophyton mentagrophytes).